The sequence spans 419 residues: UDP-N-acetylglucosamine 1-carboxyvinyltransferase (419 aa).

22–23 (KN) serves as a coordination point for phosphoenolpyruvate. Residue Arg-92 participates in UDP-N-acetyl-alpha-D-glucosamine binding. The active-site Proton donor is the Cys-116. The residue at position 116 (Cys-116) is a 2-(S-cysteinyl)pyruvic acid O-phosphothioketal. UDP-N-acetyl-alpha-D-glucosamine-binding positions include 121–125 (RPIDL), Asp-306, and Ile-328.

The protein belongs to the EPSP synthase family. MurA subfamily.

It is found in the cytoplasm. It catalyses the reaction phosphoenolpyruvate + UDP-N-acetyl-alpha-D-glucosamine = UDP-N-acetyl-3-O-(1-carboxyvinyl)-alpha-D-glucosamine + phosphate. It participates in cell wall biogenesis; peptidoglycan biosynthesis. Functionally, cell wall formation. Adds enolpyruvyl to UDP-N-acetylglucosamine. Target for the antibiotic fosfomycin. Involved in heteroresistance to antibiotic fosfomycin. Heteroresistance is the ability of a clonal population to grow one or several subpopulations at a frequency of 10(-7) to 10(-3) in the presence of a higher antibiotic concentration than that predicted to be effective by measurement of the minimum inhibitory concentration (MIC). The sequence is that of UDP-N-acetylglucosamine 1-carboxyvinyltransferase from Streptococcus pneumoniae serotype 2 (strain D39 / NCTC 7466).